Consider the following 640-residue polypeptide: 1,4-alpha-glucan branching enzyme GlgB (640 aa).

The Nucleophile role is filled by aspartate 318. The active-site Proton donor is glutamate 371.

Belongs to the glycosyl hydrolase 13 family. GlgB subfamily. As to quaternary structure, monomer.

It carries out the reaction Transfers a segment of a (1-&gt;4)-alpha-D-glucan chain to a primary hydroxy group in a similar glucan chain.. It participates in glycan biosynthesis; glycogen biosynthesis. In terms of biological role, catalyzes the formation of the alpha-1,6-glucosidic linkages in glycogen by scission of a 1,4-alpha-linked oligosaccharide from growing alpha-1,4-glucan chains and the subsequent attachment of the oligosaccharide to the alpha-1,6 position. The chain is 1,4-alpha-glucan branching enzyme GlgB from Francisella tularensis subsp. tularensis (strain FSC 198).